A 776-amino-acid chain; its full sequence is Disintegrin and metalloproteinase domain-containing protein 28 (776 aa).

Positions 1-19 (MLQALLTVSLLLSPVPVSA) are cleaved as a signal peptide. A propeptide spanning residues 20–193 (IKELPGVKKY…IARPATRLVK (174 aa)) is cleaved from the precursor. The Cysteine switch motif lies at 168–175 (STCGTDGV). Cysteine 170 is a binding site for Zn(2+). Residues 194 to 666 (LNDGKVQKHE…CDDSSVVFYF (473 aa)) are Extracellular-facing. A Peptidase M12B domain is found at 204–400 (KYIEYYLVLD…KLSNCLFNAP (197 aa)). 2 N-linked (GlcNAc...) asparagine glycosylation sites follow: asparagine 268 and asparagine 275. 4 disulfide bridges follow: cysteine 315/cysteine 395, cysteine 355/cysteine 379, cysteine 357/cysteine 362, and cysteine 466/cysteine 486. Histidine 340 lines the Zn(2+) pocket. Residue glutamate 341 is part of the active site. 2 residues coordinate Zn(2+): histidine 344 and histidine 350. Asparagine 352 carries N-linked (GlcNAc...) asparagine glycosylation. Residues 408 to 494 (TPICGNQMVE…NCPDDRFRAN (87 aa)) form the Disintegrin domain. Residues asparagine 558, asparagine 603, and asparagine 629 are each glycosylated (N-linked (GlcNAc...) asparagine). The EGF-like domain maps to 626-658 (KSTNCSSKCKGHAVCDHELQCQCEEGWSPPDCD). 3 disulfides stabilise this stretch: cysteine 630/cysteine 640, cysteine 634/cysteine 646, and cysteine 648/cysteine 657. Residues 667-687 (SIVVAVLFPVAVISLVVAIVI) form a helical membrane-spanning segment. Over 688 to 776 (RQQSSREKQK…SSFLDSNPKA (89 aa)) the chain is Cytoplasmic. Over residues 691 to 701 (SSREKQKKDQR) the composition is skewed to basic and acidic residues. Disordered stretches follow at residues 691–728 (SSRE…PQEM) and 746–776 (PASF…NPKA). The segment covering 709-718 (RPHKQKRKPQ) has biased composition (basic residues).

Zn(2+) serves as cofactor. Post-translationally, pro-domain removal and maturation may be, at least in part, autocatalytic. Expressed at high levels in epididymis and at lower levels in lung.

It localises to the membrane. Functionally, may play a role in the adhesive and proteolytic events that occur during lymphocyte emigration or may function in ectodomain shedding of lymphocyte surface target proteins, such as FASL and CD40L. May be involved in sperm maturation. The sequence is that of Disintegrin and metalloproteinase domain-containing protein 28 (ADAM28) from Macaca fascicularis (Crab-eating macaque).